A 353-amino-acid chain; its full sequence is UPF0324 membrane protein PP_3661 (353 aa).

8 helical membrane passes run 20-42, 70-92, 105-127, 137-159, 166-188, 234-253, 266-288, and 326-348; these read LNGILFVALFAVAVTQLAAMPAI, ASWAAGINFSARGLLRIAVAFFG, WSGLIVSVLVVTSTLLIGLWCGM, ALLTAAGSAICGAAAVLAFESAL, SAMAVGSVVLFGTLSMFLYPLAI, MTRVMLLVPVLLVVGLWISR, IAMPWFAFGFLALVLVNSMQVLP, and ALATGAILNLWLVGGGLAITLGV.

Belongs to the UPF0324 family.

The protein localises to the cell membrane. The polypeptide is UPF0324 membrane protein PP_3661 (Pseudomonas putida (strain ATCC 47054 / DSM 6125 / CFBP 8728 / NCIMB 11950 / KT2440)).